The following is a 410-amino-acid chain: uncharacterized protein (410 aa).

The N-terminal stretch at 1–41 (MVKSFRMKALIAGAAVAAAVSAGAVSDVPAAKVLQPTAAYA) is a signal peptide.

Interacts with PcrA, Pdp, YclM, YkvL, YhcQ and YomL. The interaction with PcrA is not essential for cell viability or repair of UV-induced lesions.

The protein resides in the secreted. In terms of biological role, increases the processivity of the PcrA helicase, but does not bind to DNA. This is an uncharacterized protein from Bacillus subtilis (strain 168).